The following is a 162-amino-acid chain: Regulator of ribonuclease activity A (162 aa).

Belongs to the RraA family. In terms of assembly, homotrimer. Binds to both RNA-binding sites in the C-terminal region of Rne and to RhlB.

It is found in the cytoplasm. In terms of biological role, globally modulates RNA abundance by binding to RNase E (Rne) and regulating its endonucleolytic activity. Can modulate Rne action in a substrate-dependent manner by altering the composition of the degradosome. Modulates RNA-binding and helicase activities of the degradosome. This is Regulator of ribonuclease activity A from Haemophilus influenzae (strain 86-028NP).